A 109-amino-acid chain; its full sequence is Aquaporin-2 (109 aa).

Residues 1–6 (SVAFSR) lie on the Cytoplasmic side of the membrane. The chain crosses the membrane as a helical span at residues 7–27 (AVLAEFLATLIFVFFGLGSAL). The Extracellular segment spans residues 28-35 (SWPQALPS). A helical transmembrane segment spans residues 36 to 54 (VLQIALAFGLAIGTLVQAL). The Cytoplasmic segment spans residues 55–59 (GHVSG). The segment at residues 60–69 (AHINPAVTVA) is an intramembrane region (discontinuously helical). Positions 63–65 (NPA) match the NPA 1 motif. The Cytoplasmic portion of the chain corresponds to 70–80 (CLVGCHVSFLR). The helical transmembrane segment at 81 to 102 (AAFYVAAQLLGAVAGAAILHEI) threads the bilayer. The Extracellular portion of the chain corresponds to 103-109 (TPPDVRG).

It belongs to the MIP/aquaporin (TC 1.A.8) family. Homotetramer. Post-translationally, serine phosphorylation is necessary and sufficient for expression at the apical membrane. Endocytosis is not phosphorylation-dependent. In terms of processing, N-glycosylated.

It is found in the apical cell membrane. It localises to the basolateral cell membrane. The protein resides in the cell membrane. Its subcellular location is the cytoplasmic vesicle membrane. The protein localises to the golgi apparatus. It is found in the trans-Golgi network membrane. The enzyme catalyses H2O(in) = H2O(out). It carries out the reaction glycerol(in) = glycerol(out). Functionally, forms a water-specific channel that provides the plasma membranes of renal collecting duct with high permeability to water, thereby permitting water to move in the direction of an osmotic gradient. Plays an essential role in renal water homeostasis. Could also be permeable to glycerol. This chain is Aquaporin-2, found in Dasypus novemcinctus (Nine-banded armadillo).